The primary structure comprises 258 residues: uncharacterized protein (258 aa).

The chain crosses the membrane as a helical span at residues 163–187; that stretch reads GIVGAAGLMLMFADLNGIPGICLMG.

It localises to the membrane. This is an uncharacterized protein from Methanocaldococcus jannaschii (strain ATCC 43067 / DSM 2661 / JAL-1 / JCM 10045 / NBRC 100440) (Methanococcus jannaschii).